A 285-amino-acid polypeptide reads, in one-letter code: Probable endonuclease 4 (285 aa).

Residues His69, His109, Glu145, Asp179, His182, His216, Asp229, His231, and Glu261 each contribute to the Zn(2+) site.

This sequence belongs to the AP endonuclease 2 family. Zn(2+) is required as a cofactor.

The catalysed reaction is Endonucleolytic cleavage to 5'-phosphooligonucleotide end-products.. Functionally, endonuclease IV plays a role in DNA repair. It cleaves phosphodiester bonds at apurinic or apyrimidinic (AP) sites, generating a 3'-hydroxyl group and a 5'-terminal sugar phosphate. The polypeptide is Probable endonuclease 4 (Escherichia coli O127:H6 (strain E2348/69 / EPEC)).